Here is a 745-residue protein sequence, read N- to C-terminus: uncharacterized protein (745 aa).

The HTH araC/xylS-type domain maps to 158–256 (NQVCDYIELH…HQTPKQYRGD (99 aa)). 2 DNA-binding regions (H-T-H motif) span residues 175-196 (SELS…AESL) and 223-246 (ITDI…KHIT).

This is an uncharacterized protein from Staphylococcus aureus.